We begin with the raw amino-acid sequence, 457 residues long: Metal tolerance protein C4 (457 aa).

Residues 1-115 are Cytoplasmic-facing; it reads MQSSHRILSR…IEINDQHSQR (115 aa). The helical transmembrane segment at 116-136 threads the bilayer; it reads AVTTALWCNFLVFSLKFGVWW. The Vacuolar portion of the chain corresponds to 137–141; it reads TSSSH. Residues 142 to 162 form a helical membrane-spanning segment; it reads VIMAEVVHSVADFANQALLAY. The Cytoplasmic segment spans residues 163-183; that stretch reads GLSSSRRAPDALHPYGYSKER. The chain crosses the membrane as a helical span at residues 184–204; sequence FVWSLISAVGIFCLGSGATIV. Residues 205-220 lie on the Vacuolar side of the membrane; the sequence is NGVQNLWTSSPPPNME. Residues 221-241 form a helical membrane-spanning segment; sequence LAAVVIGGSFLIEGASLLVAI. The Cytoplasmic segment spans residues 242–267; the sequence is QSVKKGAAQEGMTIRDYIWRGHDPTS. Residues 268 to 288 form a helical membrane-spanning segment; the sequence is VAVMTEDGAAVAGLAIAAASL. Over 289-297 the chain is Vacuolar; sequence VAVRMTGNP. Residues 298–318 form a helical membrane-spanning segment; it reads IYDPIGSIVVGNLLGMVAIFL. The Cytoplasmic portion of the chain corresponds to 319–457; sequence IQRNRHALIG…HNPTPTDPSL (139 aa).

This sequence belongs to the cation diffusion facilitator (CDF) transporter (TC 2.A.4) family.

It is found in the vacuole membrane. In terms of biological role, involved in sequestration of excess metal in the cytoplasm into vacuoles to maintain metal homeostasis. The chain is Metal tolerance protein C4 (MTPC4) from Arabidopsis thaliana (Mouse-ear cress).